A 482-amino-acid chain; its full sequence is Cysteine--tRNA ligase (482 aa).

Cys29 lines the Zn(2+) pocket. Positions Pro31–His41 match the 'HIGH' region motif. Zn(2+) is bound by residues Cys210, His235, and Glu239. Positions Lys272–Ser276 match the 'KMSKS' region motif. Lys275 serves as a coordination point for ATP.

Belongs to the class-I aminoacyl-tRNA synthetase family. As to quaternary structure, monomer. It depends on Zn(2+) as a cofactor.

It is found in the cytoplasm. The enzyme catalyses tRNA(Cys) + L-cysteine + ATP = L-cysteinyl-tRNA(Cys) + AMP + diphosphate. This chain is Cysteine--tRNA ligase, found in Anaeromyxobacter sp. (strain Fw109-5).